The primary structure comprises 362 residues: C-C chemokine receptor type 10 (362 aa).

Residues 1–52 (MGTEATEQVSWGHYSGDEEDAYSAEPLPELCYKADVQAFSRAFQPSVSLTVA) lie on the Extracellular side of the membrane. A helical membrane pass occupies residues 53-68 (ALGLAGNGLVLATHLA). Over 69–78 (ARRAARSPTS) the chain is Cytoplasmic. A helical transmembrane segment spans residues 79–99 (AHLLQLALADLLLALTLPFAA). At 100–114 (AGALQGWSLGSATCR) the chain is on the extracellular side. C113 and C191 are oxidised to a cystine. A helical transmembrane segment spans residues 115 to 136 (TISGLYSASFHAGFLFLACISA). Over 137–159 (DRYVAIARALPAGPRPSTPGRAH) the chain is Cytoplasmic. A helical membrane pass occupies residues 160–179 (LVSVIVWLLSLLLALPALLF). Residues 180–203 (SQDGQREGQRRCRLIFPEGLTQTV) are Extracellular-facing. The helical transmembrane segment at 204–225 (KGASAVAQVALGFALPLGVMVA) threads the bilayer. The Cytoplasmic segment spans residues 226–247 (CYALLGRTLLAARGPERRRALR). Residues 248–269 (VVVALVAAFVVLQLPYSLALLL) form a helical membrane-spanning segment. At 270–290 (DTADLLAARERSCPASKRKDV) the chain is on the extracellular side. Residues 291–313 (ALLVTSGLALARCGLNPVLYAFL) traverse the membrane as a helical segment. The Cytoplasmic segment spans residues 314–362 (GLRFRQDLRRLLRGGSCPSGPQPRRGCPRRPRLSSCSAPTETHSLSWDN). The span at 328 to 338 (GSCPSGPQPRR) shows a compositional bias: low complexity. Residues 328 to 362 (GSCPSGPQPRRGCPRRPRLSSCSAPTETHSLSWDN) are disordered. Over residues 351–362 (APTETHSLSWDN) the composition is skewed to polar residues.

This sequence belongs to the G-protein coupled receptor 1 family. As to expression, expressed at high levels in adult testis, small intestine, fetal lung, fetal kidney. Weaker expression was observed in many other adult tissues including spleen, thymus, lymph node, Peyer patches, colon, heart, ovary, peripheral blood lymphocytes, thyroid and spinal cord. Also expressed by melanocytes, dermal fibroblasts, dermal microvascular endothelial cells. Also detected in T-cells and in skin-derived Langerhans cells.

It localises to the cell membrane. Functionally, receptor for chemokines SCYA27 and SCYA28. Subsequently transduces a signal by increasing the intracellular calcium ions level and stimulates chemotaxis in a pre-B cell line. The chain is C-C chemokine receptor type 10 (CCR10) from Homo sapiens (Human).